A 160-amino-acid chain; its full sequence is SsrA-binding protein (160 aa).

Residues 137-153 (DKRDDIKTREWKQDKAR) show a composition bias toward basic and acidic residues. A disordered region spans residues 137–160 (DKRDDIKTREWKQDKARIMKNANR).

It belongs to the SmpB family.

It is found in the cytoplasm. In terms of biological role, required for rescue of stalled ribosomes mediated by trans-translation. Binds to transfer-messenger RNA (tmRNA), required for stable association of tmRNA with ribosomes. tmRNA and SmpB together mimic tRNA shape, replacing the anticodon stem-loop with SmpB. tmRNA is encoded by the ssrA gene; the 2 termini fold to resemble tRNA(Ala) and it encodes a 'tag peptide', a short internal open reading frame. During trans-translation Ala-aminoacylated tmRNA acts like a tRNA, entering the A-site of stalled ribosomes, displacing the stalled mRNA. The ribosome then switches to translate the ORF on the tmRNA; the nascent peptide is terminated with the 'tag peptide' encoded by the tmRNA and targeted for degradation. The ribosome is freed to recommence translation, which seems to be the essential function of trans-translation. This chain is SsrA-binding protein, found in Edwardsiella ictaluri (strain 93-146).